Consider the following 484-residue polypeptide: Chromosomal replication initiator protein DnaA (484 aa).

The tract at residues 1 to 83 (MQPPSQDWAS…LAWRTVWPGI (83 aa)) is domain I, interacts with DnaA modulators. A domain II region spans residues 83–146 (IAEVKVSVRN…EKKAEGEDQN (64 aa)). Residues 110-146 (GDQPRPLPKKPAKKKQSVPATPKSTSPEKKAEGEDQN) are disordered. Residues 116–125 (LPKKPAKKKQ) are compositionally biased toward basic residues. Residues 135 to 146 (SPEKKAEGEDQN) show a composition bias toward basic and acidic residues. Residues 147–364 (QFEERYNFDN…GALNRVVAYA (218 aa)) are domain III, AAA+ region. 4 residues coordinate ATP: G191, G193, K194, and T195. Positions 365 to 484 (TLSNRPINMD…VRLLMRQFEG (120 aa)) are domain IV, binds dsDNA.

Belongs to the DnaA family. As to quaternary structure, oligomerizes as a right-handed, spiral filament on DNA at oriC.

Its subcellular location is the cytoplasm. Its function is as follows. Plays an essential role in the initiation and regulation of chromosomal replication. ATP-DnaA binds to the origin of replication (oriC) to initiate formation of the DNA replication initiation complex once per cell cycle. Binds the DnaA box (a 9 base pair repeat at the origin) and separates the double-stranded (ds)DNA. Forms a right-handed helical filament on oriC DNA; dsDNA binds to the exterior of the filament while single-stranded (ss)DNA is stabiized in the filament's interior. The ATP-DnaA-oriC complex binds and stabilizes one strand of the AT-rich DNA unwinding element (DUE), permitting loading of DNA polymerase. After initiation quickly degrades to an ADP-DnaA complex that is not apt for DNA replication. Binds acidic phospholipids. This Zymomonas mobilis subsp. mobilis (strain ATCC 31821 / ZM4 / CP4) protein is Chromosomal replication initiator protein DnaA.